Consider the following 131-residue polypeptide: Profilin-6 (131 aa).

A disulfide bridge connects residues C13 and C115. The Involved in PIP2 interaction motif lies at 81 to 97 (AVIRGKKGAGGITIKKT). Phosphothreonine is present on T111.

It belongs to the profilin family. Occurs in many kinds of cells as a complex with monomeric actin in a 1:1 ratio. In terms of processing, phosphorylated by MAP kinases.

The protein localises to the cytoplasm. It is found in the cytoskeleton. Its function is as follows. Binds to actin and affects the structure of the cytoskeleton. At high concentrations, profilin prevents the polymerization of actin, whereas it enhances it at low concentrations. This is Profilin-6 from Phleum pratense (Common timothy).